The chain runs to 426 residues: Adenylosuccinate synthetase 2 (426 aa).

Residues 12 to 18 (GDEGKGK) and 40 to 42 (GHT) each bind GTP. The Proton acceptor role is filled by Asp-13. Mg(2+) is bound by residues Asp-13 and Gly-40. Residues 13–16 (DEGK), 38–41 (NAGH), Arg-147, Asn-223, Thr-238, and Arg-302 contribute to the IMP site. His-41 functions as the Proton donor in the catalytic mechanism. 298–304 (TNTGRRR) is a binding site for substrate. GTP-binding positions include Arg-304, 330 to 332 (KLD), and 412 to 414 (GVG).

It belongs to the adenylosuccinate synthetase family. In terms of assembly, homodimer. The cofactor is Mg(2+).

It localises to the cytoplasm. The enzyme catalyses IMP + L-aspartate + GTP = N(6)-(1,2-dicarboxyethyl)-AMP + GDP + phosphate + 2 H(+). It participates in purine metabolism; AMP biosynthesis via de novo pathway; AMP from IMP: step 1/2. Plays an important role in the de novo pathway and in the salvage pathway of purine nucleotide biosynthesis. Catalyzes the first committed step in the biosynthesis of AMP from IMP. This is Adenylosuccinate synthetase 2 from Laccaria bicolor (strain S238N-H82 / ATCC MYA-4686) (Bicoloured deceiver).